The primary structure comprises 537 residues: Serendipity locus protein alpha (537 aa).

It is found in the cytoplasm. The protein localises to the cell membrane. Functionally, required for the cellularization of the syncytial blastoderm embryo. Involved in the localization of the actin filaments just prior to and during plasma membrane invagination. Sry-alpha together with nullo and bnk may provide auxiliary functions, by acting both to stabilize a large and dynamic microfilament structure and regulate its functions. This chain is Serendipity locus protein alpha (Sry-alpha), found in Drosophila virilis (Fruit fly).